Reading from the N-terminus, the 764-residue chain is MLPFAPVEDPWDQEDMEVFGSTSSSEPQVVFTMKNAATVMREHERKEVNDLKMVDEPMEEGEPVSCRREELVKEVPITQHVKEGYEKADPAQFDLLKVLGQGSFGKVFLVRKKTGPDAGQLYAMKVLRKASLKVRDRVRTKMERDILVEVNHPFIVKLHYAFQTEGKLYLILDFLRGGDVFTRLSKEVLFTEEDVKFYLAELALALDHLHRLGIVYRDLKPENILLDEIGHIKLTDFGLSKESVDQEKKAYSFCGTVEYMAPEVVNRRAHSQSADWWSYGVLMFEMLTGTLPFQGKDRNETMNMILKAKLGMPQFLSAEAQSLLRMLFKRNPANRLGSEGVEEVKRHAFFASIDWNKLYKREVQPPFRPASGKPDDTFCFDPEFTAKTPKDSPGLPASANAHQLFKGFSFVATSIAEEYKITPVTSSNVLPIVQINGNAAQFSEAYELKEDIGIGSYSVCKRCIHSASNVEFAVKIIDKNKRDPSEEIEILMRYGQHPNIISLKEVFDDGKYVYLVTDLMKGGELLDRILKKKCFSEQEASNVLYVITKTVECLHSQGVVHRDLKPSNILYMDESAHPDSIKICDFGFAKQLRGENGLLLTPCYTANFVAPEVLTQQGYDAACDIWSLGVLLYTMLAGYTPFSNGPNDTPEEILLRIGNGRFSLSGGIWDNISRGAKDLLSHMLHMDPHQRYTAEQVLKHPWITQREQLPRHQPNSDEPPQEAVAAPYSVLARNPNRHHPILEPVTASRLAQRRNMKKRTSTGL.

Positions 1-24 (MLPFAPVEDPWDQEDMEVFGSTSS) are disordered. Residues 93-350 (FDLLKVLGQG…VEEVKRHAFF (258 aa)) enclose the Protein kinase 1 domain. Residues 99 to 107 (LGQGSFGKV) and K125 each bind ATP. D218 functions as the Proton acceptor in the catalytic mechanism. Phosphoserine is present on residues S252, S392, and S409. One can recognise an AGC-kinase C-terminal domain in the interval 351–420 (ASIDWNKLYK…VATSIAEEYK (70 aa)). Positions 446 to 706 (YELKEDIGIG…VLKHPWITQR (261 aa)) constitute a Protein kinase 2 domain. Residues 452 to 460 (IGIGSYSVC) and K475 contribute to the ATP site. The Proton acceptor role is filled by D563. T601 carries the phosphothreonine modification.

It belongs to the protein kinase superfamily. AGC Ser/Thr protein kinase family. S6 kinase subfamily. In terms of assembly, forms a complex with MAPK3/ERK1 but not with MAPK9 or MAPK14 in serum-starved cells. Requires Mg(2+) as cofactor. In terms of processing, phosphorylated at Ser-252, Ser-392, and Ser-409 in serum-starved cells.

Its subcellular location is the cytoplasm. The protein resides in the cytosol. It is found in the nucleus. It carries out the reaction L-seryl-[protein] + ATP = O-phospho-L-seryl-[protein] + ADP + H(+). The enzyme catalyses L-threonyl-[protein] + ATP = O-phospho-L-threonyl-[protein] + ADP + H(+). Constitutively activated by phosphorylation at Ser-252, Ser-392, and Ser-409 in serum-starved cells. Does not require growth factor stimulation for significant kinase activity. Functionally, constitutively active serine/threonine-protein kinase that exhibits growth-factor-independent kinase activity and that may participate in p53/TP53-dependent cell growth arrest signaling and play an inhibitory role during embryogenesis. The protein is Ribosomal protein S6 kinase alpha-6 (Rps6ka6) of Mus musculus (Mouse).